The following is a 320-amino-acid chain: Ferrochelatase (320 aa).

Fe cation contacts are provided by histidine 194 and glutamate 275.

It belongs to the ferrochelatase family. In terms of assembly, monomer.

It is found in the cytoplasm. The enzyme catalyses heme b + 2 H(+) = protoporphyrin IX + Fe(2+). Its pathway is porphyrin-containing compound metabolism; protoheme biosynthesis; protoheme from protoporphyrin-IX: step 1/1. In terms of biological role, catalyzes the ferrous insertion into protoporphyrin IX. This is Ferrochelatase from Escherichia coli O139:H28 (strain E24377A / ETEC).